A 253-amino-acid chain; its full sequence is 5-oxoprolinase subunit A (253 aa).

This sequence belongs to the LamB/PxpA family. As to quaternary structure, forms a complex composed of PxpA, PxpB and PxpC.

The enzyme catalyses 5-oxo-L-proline + ATP + 2 H2O = L-glutamate + ADP + phosphate + H(+). Catalyzes the cleavage of 5-oxoproline to form L-glutamate coupled to the hydrolysis of ATP to ADP and inorganic phosphate. This is 5-oxoprolinase subunit A from Ruegeria pomeroyi (strain ATCC 700808 / DSM 15171 / DSS-3) (Silicibacter pomeroyi).